The primary structure comprises 153 residues: Small ribosomal subunit protein uS5c (153 aa).

An S5 DRBM domain is found at 11–74 (WQERVIQIRR…VDAKKQLINI (64 aa)).

Belongs to the universal ribosomal protein uS5 family. As to quaternary structure, part of the 30S ribosomal subunit. Contacts protein S4.

Its subcellular location is the plastid. The protein localises to the chloroplast. Functionally, with S4 and S12 plays an important role in translational accuracy. This chain is Small ribosomal subunit protein uS5c (rps5), found in Cyanidioschyzon merolae (strain NIES-3377 / 10D) (Unicellular red alga).